A 377-amino-acid polypeptide reads, in one-letter code: Nitric oxide reductase FlRd-NAD(+) reductase (377 aa).

This sequence belongs to the FAD-dependent oxidoreductase family. Requires FAD as cofactor.

Its subcellular location is the cytoplasm. It carries out the reaction 2 reduced [nitric oxide reductase rubredoxin domain] + NAD(+) + H(+) = 2 oxidized [nitric oxide reductase rubredoxin domain] + NADH. Its pathway is nitrogen metabolism; nitric oxide reduction. One of at least two accessory proteins for anaerobic nitric oxide (NO) reductase. Reduces the rubredoxin moiety of NO reductase. This is Nitric oxide reductase FlRd-NAD(+) reductase from Escherichia coli O45:K1 (strain S88 / ExPEC).